Reading from the N-terminus, the 287-residue chain is Acetylglutamate kinase (287 aa).

Residues 70 to 71 (GG), Arg92, and Asn184 each bind substrate.

It belongs to the acetylglutamate kinase family. ArgB subfamily.

It localises to the cytoplasm. The catalysed reaction is N-acetyl-L-glutamate + ATP = N-acetyl-L-glutamyl 5-phosphate + ADP. It participates in amino-acid biosynthesis; L-arginine biosynthesis; N(2)-acetyl-L-ornithine from L-glutamate: step 2/4. In terms of biological role, catalyzes the ATP-dependent phosphorylation of N-acetyl-L-glutamate. This chain is Acetylglutamate kinase, found in Roseobacter denitrificans (strain ATCC 33942 / OCh 114) (Erythrobacter sp. (strain OCh 114)).